Here is a 216-residue protein sequence, read N- to C-terminus: Orotate phosphoribosyltransferase (216 aa).

Lysine 30 serves as a coordination point for 5-phospho-alpha-D-ribose 1-diphosphate. Residue 38 to 39 (FF) coordinates orotate. Residues 75–76 (YK), arginine 102, lysine 103, lysine 106, histidine 108, and 128–136 (DDVITAGTA) contribute to the 5-phospho-alpha-D-ribose 1-diphosphate site. Residues threonine 132 and arginine 160 each coordinate orotate.

This sequence belongs to the purine/pyrimidine phosphoribosyltransferase family. PyrE subfamily. In terms of assembly, homodimer. Mg(2+) is required as a cofactor.

The enzyme catalyses orotidine 5'-phosphate + diphosphate = orotate + 5-phospho-alpha-D-ribose 1-diphosphate. It functions in the pathway pyrimidine metabolism; UMP biosynthesis via de novo pathway; UMP from orotate: step 1/2. Catalyzes the transfer of a ribosyl phosphate group from 5-phosphoribose 1-diphosphate to orotate, leading to the formation of orotidine monophosphate (OMP). The polypeptide is Orotate phosphoribosyltransferase (Acinetobacter baylyi (strain ATCC 33305 / BD413 / ADP1)).